Consider the following 307-residue polypeptide: Undecaprenyl-diphosphatase (307 aa).

The next 6 membrane-spanning stretches (helical) occupy residues 40-60 (AAKT…VVYF), 79-99 (LRLA…GLLF), 107-127 (LFGP…MIGV), 183-203 (AAAA…ATVF), 219-239 (IVAL…VIAV), and 249-269 (LAPF…LWIA).

It belongs to the UppP family.

Its subcellular location is the cell inner membrane. The enzyme catalyses di-trans,octa-cis-undecaprenyl diphosphate + H2O = di-trans,octa-cis-undecaprenyl phosphate + phosphate + H(+). Functionally, catalyzes the dephosphorylation of undecaprenyl diphosphate (UPP). Confers resistance to bacitracin. This chain is Undecaprenyl-diphosphatase, found in Sorangium cellulosum (strain So ce56) (Polyangium cellulosum (strain So ce56)).